Consider the following 218-residue polypeptide: N-(5'-phosphoribosyl)anthranilate isomerase (218 aa).

Belongs to the TrpF family.

The enzyme catalyses N-(5-phospho-beta-D-ribosyl)anthranilate = 1-(2-carboxyphenylamino)-1-deoxy-D-ribulose 5-phosphate. Its pathway is amino-acid biosynthesis; L-tryptophan biosynthesis; L-tryptophan from chorismate: step 3/5. The chain is N-(5'-phosphoribosyl)anthranilate isomerase from Rhodopseudomonas palustris (strain HaA2).